Consider the following 466-residue polypeptide: Chromosomal replication initiator protein DnaA (466 aa).

Residues 1–85 (MSLSLWQHCL…FEVGNKPVSA (85 aa)) form a domain I, interacts with DnaA modulators region. The disordered stretch occupies residues 82 to 122 (PVSARTTESVPKTVTHPAVNSTPTNSQPVRPSWDNQPQSQL). The segment covering 85 to 122 (ARTTESVPKTVTHPAVNSTPTNSQPVRPSWDNQPQSQL) has biased composition (polar residues). The tract at residues 85-129 (ARTTESVPKTVTHPAVNSTPTNSQPVRPSWDNQPQSQLPELNYRS) is domain II. Residues 130–346 (NVNPKHKFDN…GALNRVIANA (217 aa)) form a domain III, AAA+ region region. Residues G174, G176, K177, and T178 each coordinate ATP. The domain IV, binds dsDNA stretch occupies residues 347 to 466 (NFTGRAITID…FSNLIRTLSS (120 aa)).

This sequence belongs to the DnaA family. Oligomerizes as a right-handed, spiral filament on DNA at oriC.

It localises to the cytoplasm. Its function is as follows. Plays an essential role in the initiation and regulation of chromosomal replication. ATP-DnaA binds to the origin of replication (oriC) to initiate formation of the DNA replication initiation complex once per cell cycle. Binds the DnaA box (a 9 base pair repeat at the origin) and separates the double-stranded (ds)DNA. Forms a right-handed helical filament on oriC DNA; dsDNA binds to the exterior of the filament while single-stranded (ss)DNA is stabiized in the filament's interior. The ATP-DnaA-oriC complex binds and stabilizes one strand of the AT-rich DNA unwinding element (DUE), permitting loading of DNA polymerase. After initiation quickly degrades to an ADP-DnaA complex that is not apt for DNA replication. Binds acidic phospholipids. This Proteus mirabilis (strain HI4320) protein is Chromosomal replication initiator protein DnaA.